Reading from the N-terminus, the 247-residue chain is ATP synthase subunit a (247 aa).

Helical transmembrane passes span 26–46 (ITNNTIILFVILIGFTFLFYV), 85–105 (YFPLVLFVFSFILFANLIGLL), 115–135 (IIFTFQIAFSLFFGITLINFF), 141–161 (FFNLFVPSGVPKPLIPFLVVI), 178–198 (FANMLAGHTLLNILSAFIFNV), and 205–225 (ISFLPLLFIVFIIVLEFCIAI).

It belongs to the ATPase A chain family. F-type ATPases have 2 components, CF(1) - the catalytic core - and CF(0) - the membrane proton channel. CF(1) has five subunits: alpha(3), beta(3), gamma(1), delta(1), epsilon(1). CF(0) has three main subunits: a, b and c.

The protein resides in the mitochondrion inner membrane. Mitochondrial membrane ATP synthase (F(1)F(0) ATP synthase or Complex V) produces ATP from ADP in the presence of a proton gradient across the membrane which is generated by electron transport complexes of the respiratory chain. F-type ATPases consist of two structural domains, F(1) - containing the extramembraneous catalytic core and F(0) - containing the membrane proton channel, linked together by a central stalk and a peripheral stalk. During catalysis, ATP synthesis in the catalytic domain of F(1) is coupled via a rotary mechanism of the central stalk subunits to proton translocation. Key component of the proton channel; it may play a direct role in the translocation of protons across the membrane. The chain is ATP synthase subunit a (ATP6) from Acanthamoeba castellanii (Amoeba).